A 398-amino-acid polypeptide reads, in one-letter code: Phosphoglycerate kinase (398 aa).

Substrate contacts are provided by residues 21–23 (DFN), Arg-36, 59–62 (HLGR), Arg-119, and Arg-157. Residues Lys-208, Gly-296, Glu-327, and 354 to 357 (GGDS) contribute to the ATP site.

Belongs to the phosphoglycerate kinase family. In terms of assembly, monomer.

The protein localises to the cytoplasm. It catalyses the reaction (2R)-3-phosphoglycerate + ATP = (2R)-3-phospho-glyceroyl phosphate + ADP. The protein operates within carbohydrate degradation; glycolysis; pyruvate from D-glyceraldehyde 3-phosphate: step 2/5. The chain is Phosphoglycerate kinase from Streptococcus uberis (strain ATCC BAA-854 / 0140J).